We begin with the raw amino-acid sequence, 366 residues long: Aminomethyltransferase (366 aa).

This sequence belongs to the GcvT family. The glycine cleavage system is composed of four proteins: P, T, L and H.

The catalysed reaction is N(6)-[(R)-S(8)-aminomethyldihydrolipoyl]-L-lysyl-[protein] + (6S)-5,6,7,8-tetrahydrofolate = N(6)-[(R)-dihydrolipoyl]-L-lysyl-[protein] + (6R)-5,10-methylene-5,6,7,8-tetrahydrofolate + NH4(+). Functionally, the glycine cleavage system catalyzes the degradation of glycine. The protein is Aminomethyltransferase of Chlorobium chlorochromatii (strain CaD3).